The chain runs to 79 residues: Small ribosomal subunit protein uS17 (79 aa).

It belongs to the universal ribosomal protein uS17 family. As to quaternary structure, part of the 30S ribosomal subunit.

In terms of biological role, one of the primary rRNA binding proteins, it binds specifically to the 5'-end of 16S ribosomal RNA. The polypeptide is Small ribosomal subunit protein uS17 (Mesorhizobium japonicum (strain LMG 29417 / CECT 9101 / MAFF 303099) (Mesorhizobium loti (strain MAFF 303099))).